The sequence spans 357 residues: Ion-translocating oxidoreductase complex subunit D (357 aa).

3 helical membrane-spanning segments follow: residues Val35–Val55, Leu88–Gly108, and Leu119–Thr139. An FMN phosphoryl threonine modification is found at Thr176. Helical transmembrane passes span Ala209 to Ile229, Val233 to Phe253, Tyr261 to Ala281, Ala295 to Pro315, and Glu316 to Ile336.

It belongs to the NqrB/RnfD family. The complex is composed of six subunits: RnfA, RnfB, RnfC, RnfD, RnfE and RnfG. FMN is required as a cofactor.

The protein resides in the cell inner membrane. Part of a membrane-bound complex that couples electron transfer with translocation of ions across the membrane. This chain is Ion-translocating oxidoreductase complex subunit D, found in Halorhodospira halophila (strain DSM 244 / SL1) (Ectothiorhodospira halophila (strain DSM 244 / SL1)).